Consider the following 118-residue polypeptide: Large ribosomal subunit protein bL21c (118 aa).

The protein belongs to the bacterial ribosomal protein bL21 family. In terms of assembly, part of the 50S ribosomal subunit.

It localises to the plastid. The protein localises to the chloroplast. Its function is as follows. This protein binds to 23S rRNA. This chain is Large ribosomal subunit protein bL21c, found in Zygnema circumcarinatum (Green alga).